Consider the following 220-residue polypeptide: Inner membrane protein YqjA (220 aa).

Over 1–27 (MELLTQLLQALWAQDFETLANPSMIGM) the chain is Periplasmic. A helical transmembrane segment spans residues 28–48 (LYFVLFVILFLENGLLPAAFL). At 49-52 (PGDS) the chain is on the cytoplasmic side. 2 consecutive transmembrane segments (helical) span residues 53–73 (LLVL…QTIL) and 74–94 (LLTV…RWLG). Over 95–154 (NTRTVQNWLSHLPAHYHQRAHHLFHKHGLSALLIGRFIAFVRTLLPTIAGLSGLNNARFQ) the chain is Cytoplasmic. A helical transmembrane segment spans residues 155-175 (FFNWMSGLLWVLILTTLGYML). Over 176–191 (GKTPVFLKYEDQLMSC) the chain is Periplasmic. Residues 192 to 212 (LMLLPVVLLVFGLAGSLVVLW) traverse the membrane as a helical segment. The Cytoplasmic segment spans residues 213–220 (KKKYGNRG).

Belongs to the DedA family.

Its subcellular location is the cell inner membrane. In terms of biological role, may be a membrane transporter required for proton motive force (PMF)-dependent drug efflux. Required, with YghB, for the proper export of certain periplasmic amidases and, possibly, other Tat substrates. May play a role in determining membrane lipid composition. The polypeptide is Inner membrane protein YqjA (yqjA) (Escherichia coli (strain K12)).